Here is a 173-residue protein sequence, read N- to C-terminus: MQTIILGGGCFWCTESVFLSVKGVQSVISGYMGGDAVSANYEAVCGGNTGHVEVIKVEFDESIVPLEVILDVFFATHDPTTMDRQGNDVGSQYRSVVFYTDETQKPTIDRTINKLRDMGINVVTEVHPAVEFYQAEDTHQDFFNRNPGQAYCNFAIPPKLAKLRKEFSQYMVS.

Residue Cys-10 is part of the active site.

The protein belongs to the MsrA Met sulfoxide reductase family.

The enzyme catalyses L-methionyl-[protein] + [thioredoxin]-disulfide + H2O = L-methionyl-(S)-S-oxide-[protein] + [thioredoxin]-dithiol. It catalyses the reaction [thioredoxin]-disulfide + L-methionine + H2O = L-methionine (S)-S-oxide + [thioredoxin]-dithiol. In terms of biological role, has an important function as a repair enzyme for proteins that have been inactivated by oxidation. Catalyzes the reversible oxidation-reduction of methionine sulfoxide in proteins to methionine. The polypeptide is Peptide methionine sulfoxide reductase MsrA (Psychrobacter cryohalolentis (strain ATCC BAA-1226 / DSM 17306 / VKM B-2378 / K5)).